The following is a 390-amino-acid chain: 1-deoxy-D-xylulose 5-phosphate reductoisomerase (390 aa).

The NADPH site is built by Thr-10, Gly-11, Ser-12, Ile-13, Ala-36, Lys-37, Asn-38, and Asn-122. Lys-123 is a binding site for 1-deoxy-D-xylulose 5-phosphate. Glu-124 contacts NADPH. Residue Asp-148 coordinates Mn(2+). Residues Ser-149, Glu-150, Ser-174, and His-197 each contribute to the 1-deoxy-D-xylulose 5-phosphate site. Glu-150 contacts Mn(2+). NADPH is bound at residue Gly-203. 1-deoxy-D-xylulose 5-phosphate contacts are provided by Ser-210, Asn-215, Lys-216, and Glu-219. Glu-219 lines the Mn(2+) pocket.

Belongs to the DXR family. Mg(2+) serves as cofactor. Mn(2+) is required as a cofactor.

It carries out the reaction 2-C-methyl-D-erythritol 4-phosphate + NADP(+) = 1-deoxy-D-xylulose 5-phosphate + NADPH + H(+). Its pathway is isoprenoid biosynthesis; isopentenyl diphosphate biosynthesis via DXP pathway; isopentenyl diphosphate from 1-deoxy-D-xylulose 5-phosphate: step 1/6. Its function is as follows. Catalyzes the NADPH-dependent rearrangement and reduction of 1-deoxy-D-xylulose-5-phosphate (DXP) to 2-C-methyl-D-erythritol 4-phosphate (MEP). This Trichlorobacter lovleyi (strain ATCC BAA-1151 / DSM 17278 / SZ) (Geobacter lovleyi) protein is 1-deoxy-D-xylulose 5-phosphate reductoisomerase.